We begin with the raw amino-acid sequence, 496 residues long: 7,8-epoxymelianol synthase CYP88A154 (496 aa).

The chain crosses the membrane as a helical span at residues F11 to F31. C444 contacts heme.

This sequence belongs to the cytochrome P450 family. It depends on heme as a cofactor.

It localises to the membrane. The catalysed reaction is melianol + reduced [NADPH--hemoprotein reductase] + O2 = 7,8-epoxymelianol + oxidized [NADPH--hemoprotein reductase] + H2O + H(+). It participates in secondary metabolite biosynthesis; terpenoid biosynthesis. Monooxygenase involved in the biosynthesis of glabretanes, limonoids and quassinoids triterpene natural products such as ailanthone, chaparrinone, glaucarubinone and amarolide, allelopathic degraded triterpene lactones inhibiting the growth of other plants, and possessing antimalarial, antifeedant, insecticidal, anti-inflammatory and anticancer activities. Catalyzes the epoxidation of melianol to produce 7,8-epoxymelianol. The sequence is that of 7,8-epoxymelianol synthase CYP88A154 from Ailanthus altissima (Tree-of-heaven).